The primary structure comprises 60 residues: Metallothionein (60 aa).

Residues 1–28 (MDPCDCAKTGTCNCGTSCTCANCSCTKC) form a beta region. The a divalent metal cation site is built by C4, C6, C12, C14, C18, C20, C23, C25, C28, C32, C33, C35, C36, C40, C43, C47, C49, C54, C58, and C59. Residues 29 to 60 (KKSCCECCPSGCSKCASGCACKDKTCDTNCCQ) form an alpha region.

Belongs to the metallothionein superfamily. Type 1 family.

Its function is as follows. Metallothioneins have a high content of cysteine residues that bind various heavy metals. The protein is Metallothionein (mt) of Gadus morhua (Atlantic cod).